A 338-amino-acid chain; its full sequence is MKRINLTRYLIEEQREHNTIPAELRLLLEVVARACKAISHSVNKGALAGVLGSAGTGNVQGETQQKLDVIANEVLLEANEYGGNLAAMASEEMESFYEIPHRYPKGEYLLLFDPLDGSSNIDVNVSIGTIFSVLHMPKAGEAVTEADFMQPGSKQVAAGYAVYGPQTTLVLTVGNGVHMFTLDREVGSFVLTHRDVKIPVDTKEFAINMSNMRHWAPPVRRYIDECLAGTEGPRGKDFNMRWIASMVADVHRILTRGGIFMYPWDKREPGKAGKLRLMYEANPMAFLVEQAGGAATNGEQRILDIQPEKLHQRVAVVLGSKNEVDRVTQYHLEAKQTP.

Mg(2+)-binding residues include glutamate 91, aspartate 113, leucine 115, and aspartate 116. Residues 116-119 (DGSS), asparagine 208, and lysine 274 contribute to the substrate site. Glutamate 280 contacts Mg(2+).

It belongs to the FBPase class 1 family. In terms of assembly, homotetramer. Requires Mg(2+) as cofactor.

It localises to the cytoplasm. The enzyme catalyses beta-D-fructose 1,6-bisphosphate + H2O = beta-D-fructose 6-phosphate + phosphate. It functions in the pathway carbohydrate biosynthesis; gluconeogenesis. The chain is Fructose-1,6-bisphosphatase class 1 from Ralstonia pickettii (strain 12J).